A 143-amino-acid polypeptide reads, in one-letter code: Transcriptional regulator SlyA (143 aa).

The HTH marR-type domain maps to E2–Q135. A DNA-binding region (H-T-H motif) is located at residues Q49–D72.

It belongs to the SlyA family. Homodimer.

Transcription regulator that can specifically activate or repress expression of target genes. The chain is Transcriptional regulator SlyA from Edwardsiella ictaluri (strain 93-146).